The chain runs to 369 residues: DNA replication and repair protein RecF (369 aa).

30 to 37 (GDNGSGKT) lines the ATP pocket.

Belongs to the RecF family.

The protein localises to the cytoplasm. The RecF protein is involved in DNA metabolism; it is required for DNA replication and normal SOS inducibility. RecF binds preferentially to single-stranded, linear DNA. It also seems to bind ATP. The chain is DNA replication and repair protein RecF from Pseudomonas aeruginosa (strain UCBPP-PA14).